Reading from the N-terminus, the 136-residue chain is Small ribosomal subunit protein uS12 (136 aa).

The residue at position 89 (Asp89) is a 3-methylthioaspartic acid. The segment at 104–136 is disordered; sequence TAGVNGRTQRRSKYGAKRPKPGQAAAAAKGKKK. Positions 111–123 are enriched in basic residues; the sequence is TQRRSKYGAKRPK. Residues 124–136 are compositionally biased toward low complexity; it reads PGQAAAAAKGKKK.

Belongs to the universal ribosomal protein uS12 family. In terms of assembly, part of the 30S ribosomal subunit. Contacts proteins S8 and S17. May interact with IF1 in the 30S initiation complex.

In terms of biological role, with S4 and S5 plays an important role in translational accuracy. Its function is as follows. Interacts with and stabilizes bases of the 16S rRNA that are involved in tRNA selection in the A site and with the mRNA backbone. Located at the interface of the 30S and 50S subunits, it traverses the body of the 30S subunit contacting proteins on the other side and probably holding the rRNA structure together. The combined cluster of proteins S8, S12 and S17 appears to hold together the shoulder and platform of the 30S subunit. The sequence is that of Small ribosomal subunit protein uS12 from Parabacteroides distasonis (strain ATCC 8503 / DSM 20701 / CIP 104284 / JCM 5825 / NCTC 11152).